Consider the following 359-residue polypeptide: Serpentine receptor class epsilon-26 (359 aa).

Helical transmembrane passes span 29 to 49 (CAIS…VFVS), 66 to 86 (IGVP…ITIL), 127 to 147 (VAGF…LAIV), 172 to 192 (FIII…FNIL), 195 to 215 (YVLN…YYYI), 256 to 276 (LVFV…ALVL), and 282 to 302 (FFMH…FLVV).

Belongs to the nematode receptor-like protein sre family.

The protein resides in the membrane. This is Serpentine receptor class epsilon-26 (sre-26) from Caenorhabditis elegans.